We begin with the raw amino-acid sequence, 41 residues long: Histone H3.2 (41 aa).

The interval methionine 1–arginine 41 is disordered.

This sequence belongs to the histone H3 family. As to quaternary structure, the nucleosome is a histone octamer containing two molecules each of H2A, H2B, H3 and H4 assembled in one H3-H4 heterotetramer and two H2A-H2B heterodimers. The octamer wraps approximately 147 bp of DNA.

It localises to the nucleus. The protein localises to the chromosome. Its function is as follows. Core component of nucleosome. Nucleosomes wrap and compact DNA into chromatin, limiting DNA accessibility to the cellular machineries which require DNA as a template. Histones thereby play a central role in transcription regulation, DNA repair, DNA replication and chromosomal stability. DNA accessibility is regulated via a complex set of post-translational modifications of histones, also called histone code, and nucleosome remodeling. The polypeptide is Histone H3.2 (Tetrahymena borealis).